Consider the following 1463-residue polypeptide: DNA polymerase III PolC-type (1463 aa).

The Exonuclease domain maps to 425 to 581; the sequence is YVVFDVETTG…YDAEATGRLL (157 aa).

Belongs to the DNA polymerase type-C family. PolC subfamily.

It localises to the cytoplasm. It catalyses the reaction DNA(n) + a 2'-deoxyribonucleoside 5'-triphosphate = DNA(n+1) + diphosphate. Functionally, required for replicative DNA synthesis. This DNA polymerase also exhibits 3' to 5' exonuclease activity. The polypeptide is DNA polymerase III PolC-type (Streptococcus suis (strain 98HAH33)).